A 100-amino-acid chain; its full sequence is Urease subunit gamma (100 aa).

It belongs to the urease gamma subunit family. In terms of assembly, heterotrimer of UreA (gamma), UreB (beta) and UreC (alpha) subunits. Three heterotrimers associate to form the active enzyme.

It localises to the cytoplasm. The catalysed reaction is urea + 2 H2O + H(+) = hydrogencarbonate + 2 NH4(+). It functions in the pathway nitrogen metabolism; urea degradation; CO(2) and NH(3) from urea (urease route): step 1/1. The sequence is that of Urease subunit gamma from Synechococcus sp. (strain RCC307).